We begin with the raw amino-acid sequence, 160 residues long: MGYKLLLMYIAIVIDSVIGTAEVMSHVTAHFGKALEECRDESGLSPEILNEFKHFWSEDFDVVHRELGCAIICMSNKFSLLKDDTRIHHVNMHDYVKSFPNGEVLSAKMVNLIHNCEKQYDDITDECDRVVKVAACFKVDAKKEGIAPEVAMIEAVIEKY.

The N-terminal stretch at 1-19 (MGYKLLLMYIAIVIDSVIG) is a signal peptide. 3 disulfides stabilise this stretch: C38–C73, C69–C127, and C116–C136.

This sequence belongs to the PBP/GOBP family. As to expression, antenna.

Functionally, present in the aqueous fluid surrounding olfactory sensory dendrites and are thought to aid in the capture and transport of hydrophobic odorants into and through this fluid. In Antheraea pernyi (Chinese oak silk moth), this protein is General odorant-binding protein 2.